The primary structure comprises 298 residues: Hydroxymethylglutaryl-CoA lyase, mitochondrial (298 aa).

The 268-residue stretch at 6-273 (VKVVEVGPRD…HTGVDLQKLM (268 aa)) folds into the Pyruvate carboxyltransferase domain. R14 lines the substrate pocket. D15 contributes to the a divalent metal cation binding site. K21 bears the N6-acetyllysine mark. A divalent metal cation-binding residues include H206 and H208. The active site involves C239. N248 serves as a coordination point for a divalent metal cation. A Microbody targeting signal motif is present at residues 296-298 (CRL).

Belongs to the HMG-CoA lyase family. As to quaternary structure, homodimer; disulfide-linked. Can also form homotetramers.

It is found in the mitochondrion matrix. The protein localises to the peroxisome. It carries out the reaction (3S)-3-hydroxy-3-methylglutaryl-CoA = acetoacetate + acetyl-CoA. It participates in metabolic intermediate metabolism; (S)-3-hydroxy-3-methylglutaryl-CoA degradation; acetoacetate from (S)-3-hydroxy-3-methylglutaryl-CoA: step 1/1. In terms of biological role, mitochondrial 3-hydroxy-3-methylglutaryl-CoA lyase that catalyzes a cation-dependent cleavage of (S)-3-hydroxy-3-methylglutaryl-CoA into acetyl-CoA and acetoacetate, a key step in ketogenesis. Terminal step in leucine catabolism. Ketone bodies (beta-hydroxybutyrate, acetoacetate and acetone) are essential as an alternative source of energy to glucose, as lipid precursors and as regulators of metabolism. The chain is Hydroxymethylglutaryl-CoA lyase, mitochondrial (HMGCL) from Gallus gallus (Chicken).